A 185-amino-acid polypeptide reads, in one-letter code: Ribosome-recycling factor (185 aa).

Positions threonine 138–serine 179 are enriched in basic and acidic residues. Positions threonine 138–glycine 185 are disordered.

It belongs to the RRF family.

The protein localises to the cytoplasm. In terms of biological role, responsible for the release of ribosomes from messenger RNA at the termination of protein biosynthesis. May increase the efficiency of translation by recycling ribosomes from one round of translation to another. In Lactobacillus gasseri (strain ATCC 33323 / DSM 20243 / BCRC 14619 / CIP 102991 / JCM 1131 / KCTC 3163 / NCIMB 11718 / NCTC 13722 / AM63), this protein is Ribosome-recycling factor.